We begin with the raw amino-acid sequence, 102 residues long: ATP-dependent Clp protease adapter protein ClpS (102 aa).

This sequence belongs to the ClpS family. Binds to the N-terminal domain of the chaperone ClpA.

Involved in the modulation of the specificity of the ClpAP-mediated ATP-dependent protein degradation. The sequence is that of ATP-dependent Clp protease adapter protein ClpS from Shewanella frigidimarina (strain NCIMB 400).